The primary structure comprises 135 residues: NADPH-dependent 7-cyano-7-deazaguanine reductase (135 aa).

The active-site Thioimide intermediate is the Cys48. Residue Asp55 is the Proton donor of the active site. Residues 70 to 72 and 89 to 90 contribute to the substrate site; these read LEL and HE.

It belongs to the GTP cyclohydrolase I family. QueF type 1 subfamily.

It localises to the cytoplasm. It catalyses the reaction 7-aminomethyl-7-carbaguanine + 2 NADP(+) = 7-cyano-7-deazaguanine + 2 NADPH + 3 H(+). The protein operates within tRNA modification; tRNA-queuosine biosynthesis. Functionally, catalyzes the NADPH-dependent reduction of 7-cyano-7-deazaguanine (preQ0) to 7-aminomethyl-7-deazaguanine (preQ1). This chain is NADPH-dependent 7-cyano-7-deazaguanine reductase, found in Prochlorococcus marinus (strain SARG / CCMP1375 / SS120).